A 185-amino-acid polypeptide reads, in one-letter code: Orotate phosphoribosyltransferase (185 aa).

Residues R94, K95, K98, H100, and E120 to S128 each bind 5-phospho-alpha-D-ribose 1-diphosphate. 2 residues coordinate orotate: T124 and R152.

The protein belongs to the purine/pyrimidine phosphoribosyltransferase family. PyrE subfamily. In terms of assembly, homodimer. It depends on Mg(2+) as a cofactor.

It carries out the reaction orotidine 5'-phosphate + diphosphate = orotate + 5-phospho-alpha-D-ribose 1-diphosphate. It participates in pyrimidine metabolism; UMP biosynthesis via de novo pathway; UMP from orotate: step 1/2. Its function is as follows. Catalyzes the transfer of a ribosyl phosphate group from 5-phosphoribose 1-diphosphate to orotate, leading to the formation of orotidine monophosphate (OMP). This is Orotate phosphoribosyltransferase from Thermococcus kodakarensis (strain ATCC BAA-918 / JCM 12380 / KOD1) (Pyrococcus kodakaraensis (strain KOD1)).